The primary structure comprises 557 residues: Urocanate hydratase (557 aa).

Residues 53–54, Q131, 177–179, 197–202, 243–244, 264–268, 274–275, and 323–324 contribute to the NAD(+) site; these read GG, GMG, ECQQSR, NA, QTSAH, YL, and YG. Residue C411 is part of the active site. Residues 455 to 456 and G493 contribute to the NAD(+) site; that span reads RE.

Homodimer. The cofactor is NAD(+).

The protein resides in the cytoplasm. It catalyses the reaction 4-imidazolone-5-propanoate = trans-urocanate + H2O. It functions in the pathway amino-acid degradation; L-histidine degradation into L-glutamate; N-formimidoyl-L-glutamate from L-histidine: step 2/3. In terms of biological role, catalyzes the conversion of urocanate to 4-imidazolone-5-propionate. The protein is Urocanate hydratase of Pseudomonas putida (Arthrobacter siderocapsulatus).